The sequence spans 375 residues: MYSLLETELKNPVGPPTPAAGTGVPAAPGAAGKSGANPAGGANAGNGGSGGANGGGGGGGGGGSDQDRVKRPMNAFMVWSRGQRRKMALENPKMHNSEISKRLGADWKLLTDAEKRPFIDEAKRLRAVHMKEYPDYKYRPRRKTKTLLKKDKYSLPGGLLPPGAAAAAAAAAAAAAASSPVGVGQRLDTYTHVNGWANGAYSLVQEQLGYAQPPSMSSPPPPPALPQMHRYDMAGLQYSPMMPPGAQSYMNAAAAAAAASGYGGMAPSAAAAAAAAYGQQPATAAAAAAAAAAMSLGPMGSVVKSEPSSPPPAIASHSQRACLGDLRDMISMYLPPGGDAADAASPLPGGRLHGVHQHYQGAGTAVNGTVPLTHI.

The disordered stretch occupies residues 1–69 (MYSLLETELK…GGGGSDQDRV (69 aa)). Over residues 19-41 (AAGTGVPAAPGAAGKSGANPAGG) the composition is skewed to low complexity. The span at 42–64 (ANAGNGGSGGANGGGGGGGGGGS) shows a compositional bias: gly residues. The segment at residues 69–137 (VKRPMNAFMV…VHMKEYPDYK (69 aa)) is a DNA-binding region (HMG box). A 9aaTAD motif is present at residues 325–336 (DLRDMISMYLPP).

As to quaternary structure, interacts with SOX2 and FGFR1. As to expression, expressed in developing parathyroids of mouse embryos between 10.5 and 15.5 days post-coitum. Expressed in the developing central nervous system. Expressed in the developing urogenital ridge.

The protein localises to the nucleus. Functionally, transcription factor required during the formation of the hypothalamo-pituitary axis. May function as a switch in neuronal development. Keeps neural cells undifferentiated by counteracting the activity of proneural proteins and suppresses neuronal differentiation. Required also within the pharyngeal epithelia for craniofacial morphogenesis. Controls a genetic switch in male development. Is necessary for initiating male sex determination by directing the development of supporting cell precursors (pre-Sertoli cells) as Sertoli rather than granulosa cells. The polypeptide is Transcription factor SOX-3 (Sox3) (Mus musculus (Mouse)).